The following is a 78-amino-acid chain: Small ribosomal subunit protein bS18 (78 aa).

Belongs to the bacterial ribosomal protein bS18 family. Part of the 30S ribosomal subunit. Forms a tight heterodimer with protein bS6.

Its function is as follows. Binds as a heterodimer with protein bS6 to the central domain of the 16S rRNA, where it helps stabilize the platform of the 30S subunit. The polypeptide is Small ribosomal subunit protein bS18 (Clostridium novyi (strain NT)).